Consider the following 345-residue polypeptide: MTDKTSLSYKDAGVDIDAGNALVGRIKGVVKKTRRPEVMGGLGGFGALCALPQKYREPVLVSGTDGVGTKLRLAMDLKRHDTIGIDLVAMCVNDLVVQGAEPLFFLDYYATGKLDVDTASAVISGIAEGCLQSGCSLVGGETAEMPGMYHGEDYDVAGFCVGVVEKSEIIDGSKVSDGDVLIALGSSGPHSNGYSLVRKILEVSGCDPQTTELDGKPLADHLLAPTRIYVKSVLKLIEKVDVHAIAHLTGGGFWENIPRVLPDNTQAVIDESSWQWPEVFNWLQTAGNVERHEMYRTFNCGVGMIIALPAPEVDKALALLNANGENAWKIGIIKASDSEQRVVIE.

Belongs to the AIR synthase family.

The protein localises to the cytoplasm. The catalysed reaction is 2-formamido-N(1)-(5-O-phospho-beta-D-ribosyl)acetamidine + ATP = 5-amino-1-(5-phospho-beta-D-ribosyl)imidazole + ADP + phosphate + H(+). It participates in purine metabolism; IMP biosynthesis via de novo pathway; 5-amino-1-(5-phospho-D-ribosyl)imidazole from N(2)-formyl-N(1)-(5-phospho-D-ribosyl)glycinamide: step 2/2. In Escherichia coli O6:K15:H31 (strain 536 / UPEC), this protein is Phosphoribosylformylglycinamidine cyclo-ligase.